Consider the following 91-residue polypeptide: Cell division topological specificity factor (91 aa).

The protein belongs to the MinE family.

Functionally, prevents the cell division inhibition by proteins MinC and MinD at internal division sites while permitting inhibition at polar sites. This ensures cell division at the proper site by restricting the formation of a division septum at the midpoint of the long axis of the cell. This is Cell division topological specificity factor from Wigglesworthia glossinidia brevipalpis.